The primary structure comprises 428 residues: MPSLKTLLRGVLVAAMLVAGSARAELNIEIIGGGASRHAISVLPFKDEGPTQGNLTPVIRNDLALSGAFRLIDPSAVANVPFEPADIRYPLWQAAGAQSLAIGKVESAGGGQIKISFRLMDASQRKQLTGGEFTVTPDRSRQVAHAIADMIYEAITGQKGFFNTRLAYVLKSGRSYALQISDVDGQRSQTILRSTEPIISPSWSPDGRHIAYVSFASQKPVVWVQDLATGQRRAVANFKGSNSAPAWSPDGSKLAVVLTTSGNSQIYIINAAGGPARRLMYNGGIDTEPAFSPDGSMVYFVSDRSGNPQIYRVPVNGGNAQRVTWEGAYNVSPKLSPDGKTLVYIRRSAGNFRVMSQDLATNDSRQLSDGSYSERPSFAPNGRMVLYSSDAGGQSVLYAATADGSSKVKLAVLNGDVQDPAWGPFNNP.

Positions 1–24 (MPSLKTLLRGVLVAAMLVAGSARA) are cleaved as a signal peptide.

Belongs to the TolB family. The Tol-Pal system is composed of five core proteins: the inner membrane proteins TolA, TolQ and TolR, the periplasmic protein TolB and the outer membrane protein Pal. They form a network linking the inner and outer membranes and the peptidoglycan layer.

Its subcellular location is the periplasm. Functionally, part of the Tol-Pal system, which plays a role in outer membrane invagination during cell division and is important for maintaining outer membrane integrity. This Chromobacterium violaceum (strain ATCC 12472 / DSM 30191 / JCM 1249 / CCUG 213 / NBRC 12614 / NCIMB 9131 / NCTC 9757 / MK) protein is Tol-Pal system protein TolB.